A 431-amino-acid polypeptide reads, in one-letter code: Gamma-glutamyl phosphate reductase (431 aa).

The protein belongs to the gamma-glutamyl phosphate reductase family.

It is found in the cytoplasm. The enzyme catalyses L-glutamate 5-semialdehyde + phosphate + NADP(+) = L-glutamyl 5-phosphate + NADPH + H(+). It functions in the pathway amino-acid biosynthesis; L-proline biosynthesis; L-glutamate 5-semialdehyde from L-glutamate: step 2/2. Its function is as follows. Catalyzes the NADPH-dependent reduction of L-glutamate 5-phosphate into L-glutamate 5-semialdehyde and phosphate. The product spontaneously undergoes cyclization to form 1-pyrroline-5-carboxylate. This Methylobacterium sp. (strain 4-46) protein is Gamma-glutamyl phosphate reductase.